The following is a 321-amino-acid chain: MSLKIVYFGTPQFAATVLADLLHHEVNVVAVVTRVDKPQKRSSQLIPSPVKTLALSKNIPLLQPEKVSDPQFVEQLRDFEADVFIVVAYGAILKQMVLDIPKYGCYNLHAGLLPAYRGAAPIQRCIMDGVVQSGNTVIRMDAGMDTGDIANVSFVPVGPDMTAGELAEALASQGGEILIKTLQQISDGTITHTPQEASKASIAPKLSKEEGFILWDHPAEKVYAQIRGVTPAPGAWTLYSYQGKPARRLVIRKASLSSSQGVYGHPGDILLSDQQELLVACAEGAICLKEIQPEGKGVMDSKSFLNGHSGHKLKLSLNLMS.

Residue G111–P114 coordinates (6S)-5,6,7,8-tetrahydrofolate.

It belongs to the Fmt family.

It carries out the reaction L-methionyl-tRNA(fMet) + (6R)-10-formyltetrahydrofolate = N-formyl-L-methionyl-tRNA(fMet) + (6S)-5,6,7,8-tetrahydrofolate + H(+). Functionally, attaches a formyl group to the free amino group of methionyl-tRNA(fMet). The formyl group appears to play a dual role in the initiator identity of N-formylmethionyl-tRNA by promoting its recognition by IF2 and preventing the misappropriation of this tRNA by the elongation apparatus. In Chlamydia abortus (strain DSM 27085 / S26/3) (Chlamydophila abortus), this protein is Methionyl-tRNA formyltransferase.